Consider the following 603-residue polypeptide: Mitochondrial distribution and morphology protein 34 (603 aa).

The region spanning Met1–Glu205 is the SMP-LTD domain. Residues Lys320–Gly332 show a composition bias toward low complexity. 2 disordered regions span residues Lys320–Arg511 and Ile558–Ala603. The segment covering Asn333–Gly351 has biased composition (polar residues). The segment covering Val371–Ala380 has biased composition (basic and acidic residues). Polar residues predominate over residues Gly383–Val403. Residues Pro452–Ala463 are compositionally biased toward low complexity. Polar residues predominate over residues Arg500–Leu509. A compositionally biased stretch (basic and acidic residues) spans Ile558 to Ser570.

The protein belongs to the MDM34 family. In terms of assembly, component of the ER-mitochondria encounter structure (ERMES) or MDM complex, composed of mmm1, mdm10, mdm12 and mdm34.

It localises to the mitochondrion outer membrane. Component of the ERMES/MDM complex, which serves as a molecular tether to connect the endoplasmic reticulum (ER) and mitochondria. Components of this complex are involved in the control of mitochondrial shape and protein biogenesis, and function in nonvesicular lipid trafficking between the ER and mitochondria. Mdm34 is required for the interaction of the ER-resident membrane protein mmm1 and the outer mitochondrial membrane-resident beta-barrel protein mdm10. In Pyrenophora tritici-repentis (strain Pt-1C-BFP) (Wheat tan spot fungus), this protein is Mitochondrial distribution and morphology protein 34.